The chain runs to 172 residues: Ribosomally synthesized cyclic peptide phomopsin precursor phomA (172 aa).

Positions 1-18 (MRFTPAIVIAAFCSLAVA) are cleaved as a signal peptide. Propeptides lie at residues 19–35 (APAA…AVED), 42–50 (KKRGEAVED), 57–65 (KKRGEAVED), 72–79 (KRGEAVED), 86–93 (KRGEAVED), 100–108 (KKRGEAVED), 115–122 (KRGEAVED), 129–137 (RKRGEAVED), 144–151 (KRGEAVED), 158–165 (KRGEAVED), and K172.

PhomA is processed by several endopeptidases including kexin proteases as well as the cluster-specific S41 family peptidase phomP1 and the oligopeptidase phomG to produce 10 identical copies of the hexapeptide Tyr-Val-Ile-Pro-Ile-Asp, that is further modified to yield phomapsins. The timing and order of proteolysis of the phomA precursor and PTMs are still unknown. Two tyrosinase-like enzymes, phomQ1 and phomQ2, catalyze the chlorination and hydroxylation of Tyr, respectively. PhomYb, is proposed to be involved in the construction of the macrocyclic structure. The other 4 ustYa family proteins may be involved in PTMs that generate the unique structure of phomopsin A. PhomYa is required for the hydroxylation of C-beta of Tyr. PhomYc, phomYd, and phomYe are responsible for the biosynthesis of 2,3-dehydroisoleucine (dIle), 2,3-dehydroaspartic acid (dAsp), and 3,4-dehydroproline (dPro), respectively. While dIle formation by phomYc is indispensable for the installation of dAsp by phomYd, the order of the other PTMs have not been elucidated yet. Most of the biosynthetic enzymes likely have broad substrate specificity, and thus, there might be a metabolic grid from a precursor to phomopsin A. The enzyme(s) responsible for the biosynthesis of 3,4-dehydrovaline (dVal) have also not been identified yet. Finally, phomM acts as an S-adenosylmethionine-dependent alpha-N-methyltransferase that catalyzes two successive N-methylation reactions, converting N-desmethyl-phomopsin A to phomopsin A and phomopsin A further to an N,N-dimethylated congener called phomopsin E.

It functions in the pathway mycotoxin biosynthesis. Its function is as follows. Ribosomally synthesized cyclic peptide phomopsin precursor; part of the gene cluster that mediates the biosynthesis of the phomopsins, a group of hexapeptide mycotoxins which infects lupins and causes lupinosis disease in livestock. The phomA translated product contains a 10-fold repeated peptide embedding the hexapeptide Tyr-Val-Ile-Pro-Ile-Asp, that is converted into phomapsins. After being excised from the precursor peptide by kexin proteases, the core peptides are cyclized and modified post-translationally by enzymes encoded within the corresponding gene cluster. In Diaporthe leptostromiformis (Lupinosis disease fungus), this protein is Ribosomally synthesized cyclic peptide phomopsin precursor phomA.